We begin with the raw amino-acid sequence, 385 residues long: ADP,ATP carrier protein 2, mitochondrial (385 aa).

The transit peptide at 1–74 (MVEQTQHPTI…ATTTSPVFVQ (74 aa)) directs the protein to the mitochondrion. 3 Solcar repeats span residues 82–175 (TNFA…FKRL), 187–280 (KWFA…VKPV), and 288–374 (DSFF…LQLI). 5 helical membrane passes run 84-111 (FAID…VKLL), 152-176 (TANV…KRLF), 185-205 (YWKW…SSLL), 256-277 (FNIS…YDSV), and 291-311 (FASF…SYPI). The ADP site is built by R157 and K169. R315 contributes to the ADP binding site. Positions 315–320 (RRRMMM) are important for transport activity. Residues 315–320 (RRRMMM) carry the Nucleotide carrier signature motif motif. A helical membrane pass occupies residues 351–371 (AGANILRAVAGAGVLAGYDKL).

The protein belongs to the mitochondrial carrier (TC 2.A.29) family. In terms of assembly, monomer.

It is found in the mitochondrion inner membrane. It carries out the reaction ADP(in) + ATP(out) = ADP(out) + ATP(in). The matrix-open state (m-state) is inhibited by the membrane-permeable bongkrekic acid (BKA). The cytoplasmic-open state (c-state) is inhibited by the membrane-impermeable toxic inhibitor carboxyatractyloside (CATR). Functionally, ADP:ATP antiporter that mediates import of ADP into the mitochondrial matrix for ATP synthesis, and export of ATP out to fuel the cell. Cycles between the cytoplasmic-open state (c-state) and the matrix-open state (m-state): operates by the alternating access mechanism with a single substrate-binding site intermittently exposed to either the cytosolic (c-state) or matrix (m-state) side of the inner mitochondrial membrane. The chain is ADP,ATP carrier protein 2, mitochondrial (AAC2) from Arabidopsis thaliana (Mouse-ear cress).